The following is a 313-amino-acid chain: CRISPR-associated endonuclease Cas1 1 (313 aa).

Mn(2+) is bound by residues Glu144, His211, and Asp224. Positions 288 to 313 (PPLDAPEAVDPVIPPEEPSGDDGHRG) are disordered.

This sequence belongs to the CRISPR-associated endonuclease Cas1 family. Homodimer, forms a heterotetramer with a Cas2 homodimer. Requires Mg(2+) as cofactor. The cofactor is Mn(2+).

CRISPR (clustered regularly interspaced short palindromic repeat), is an adaptive immune system that provides protection against mobile genetic elements (viruses, transposable elements and conjugative plasmids). CRISPR clusters contain spacers, sequences complementary to antecedent mobile elements, and target invading nucleic acids. CRISPR clusters are transcribed and processed into CRISPR RNA (crRNA). Acts as a dsDNA endonuclease. Involved in the integration of spacer DNA into the CRISPR cassette. The chain is CRISPR-associated endonuclease Cas1 1 from Rhodospirillum rubrum (strain ATCC 11170 / ATH 1.1.1 / DSM 467 / LMG 4362 / NCIMB 8255 / S1).